Here is a 142-residue protein sequence, read N- to C-terminus: Large ribosomal subunit protein uL13 (142 aa).

It belongs to the universal ribosomal protein uL13 family. In terms of assembly, part of the 50S ribosomal subunit.

Functionally, this protein is one of the early assembly proteins of the 50S ribosomal subunit, although it is not seen to bind rRNA by itself. It is important during the early stages of 50S assembly. The chain is Large ribosomal subunit protein uL13 from Wigglesworthia glossinidia brevipalpis.